We begin with the raw amino-acid sequence, 1053 residues long: Sal-like protein 4 (1053 aa).

The tract at residues 1 to 62 (MSRRKQAKPQ…DEVASEDEAT (62 aa)) is disordered. The span at 20–46 (EQQPQQQTPEFADAAPAAPAAGELGAP) shows a compositional bias: low complexity. At S57 the chain carries Phosphoserine. A C2H2-type 1; atypical zinc finger spans residues 72–94 (HVCEKCCAEFFSISEFLEHKKNC). The disordered stretch occupies residues 116 to 149 (SGAVLSHQPTSPGSKDCHRENGGSSEDMKEKPDA). The segment covering 130 to 149 (KDCHRENGGSSEDMKEKPDA) has biased composition (basic and acidic residues). K156 is covalently cross-linked (Glycyl lysine isopeptide (Lys-Gly) (interchain with G-Cter in SUMO1); alternate). Residue K156 forms a Glycyl lysine isopeptide (Lys-Gly) (interchain with G-Cter in SUMO2); alternate linkage. Residues K175, K190, and K290 each participate in a glycyl lysine isopeptide (Lys-Gly) (interchain with G-Cter in SUMO2) cross-link. S307 is modified (phosphoserine). A Glycyl lysine isopeptide (Lys-Gly) (interchain with G-Cter in SUMO1); alternate cross-link involves residue K316. Residue K316 forms a Glycyl lysine isopeptide (Lys-Gly) (interchain with G-Cter in SUMO2); alternate linkage. A Glycyl lysine isopeptide (Lys-Gly) (interchain with G-Cter in SUMO2) cross-link involves residue K372. K374 is covalently cross-linked (Glycyl lysine isopeptide (Lys-Gly) (interchain with G-Cter in SUMO1); alternate). Residue K374 forms a Glycyl lysine isopeptide (Lys-Gly) (interchain with G-Cter in SUMO2); alternate linkage. 2 consecutive C2H2-type zinc fingers follow at residues 382-404 (HKCK…LRSH) and 410-432 (FVCS…FHRH). K436 is covalently cross-linked (Glycyl lysine isopeptide (Lys-Gly) (interchain with G-Cter in SUMO2)). Over residues 483-496 (VGLPQNLSSGTNPK) the composition is skewed to polar residues. The segment at 483–546 (VGLPQNLSSG…QGSGTPEPGS (64 aa)) is disordered. T541 is subject to Phosphothreonine. K550 is covalently cross-linked (Glycyl lysine isopeptide (Lys-Gly) (interchain with G-Cter in SUMO2)). C2H2-type zinc fingers lie at residues 566–588 (NECL…YRTH) and 594–616 (FQCK…LGVH). Glycyl lysine isopeptide (Lys-Gly) (interchain with G-Cter in SUMO2) cross-links involve residues K597 and K623. The C2H2-type 6 zinc-finger motif lies at 626-648 (HSCPICQKKFTNAVMLQQHIRMH). 3 disordered regions span residues 694–714 (EEVS…PLPS), 736–776 (VGPA…QSRS), and 788–828 (LSPA…LPST). A compositionally biased stretch (low complexity) spans 698–708 (SQEAPSSSSKV). 2 stretches are compositionally biased toward polar residues: residues 743-776 (LQRQ…QSRS) and 788-797 (LSPANSQAES). S776 and S789 each carry phosphoserine. The span at 810-821 (ESSENSRTEMEG) shows a compositional bias: basic and acidic residues. K838 participates in a covalent cross-link: Glycyl lysine isopeptide (Lys-Gly) (interchain with G-Cter in SUMO1); alternate. Residue K838 forms a Glycyl lysine isopeptide (Lys-Gly) (interchain with G-Cter in SUMO2); alternate linkage. Residue S852 is modified to Phosphoserine. A C2H2-type 7 zinc finger spans residues 870-892 (HGCTRCGKNFSSASALQIHERTH). K896 participates in a covalent cross-link: Glycyl lysine isopeptide (Lys-Gly) (interchain with G-Cter in SUMO2). The C2H2-type 8 zinc finger occupies 898 to 920 (FVCNICGRAFTTKGNLKVHYMTH). Glycyl lysine isopeptide (Lys-Gly) (interchain with G-Cter in SUMO2) cross-links involve residues K932 and K947. The segment at 1018–1039 (GSQSGISADVEKPSATDGVPKH) is disordered. S1019 carries the post-translational modification Phosphoserine.

The protein belongs to the sal C2H2-type zinc-finger protein family. In terms of assembly, interacts with POU5F1/OCT4. Interacts with NANOG. Interacts with BEND3. Interacts with NSD2 (via PHD-type zinc fingers 1, 2 and 3). Interacts with NRBP1. In terms of processing, isoform SALL4B exists primarily as a ubiquitinated form. Post-translationally, sumoylation with both SUMO1 and SUMO2 regulates the stability, subcellular localization, transcriptional activity, and may reduce interaction with POU5F1/OCT4. Expressed in testis. Constitutively expressed in acute myeloid leukemia (AML).

It localises to the cytoplasm. It is found in the nucleus. Functionally, transcription factor with a key role in the maintenance and self-renewal of embryonic and hematopoietic stem cells. This Homo sapiens (Human) protein is Sal-like protein 4 (SALL4).